Here is a 1466-residue protein sequence, read N- to C-terminus: Retrovirus-related Pol polyprotein from transposon RE1 (1466 aa).

Residues 227-270 (SHRNTTTTNNNNNGNRNNRYDNRNNNNNSKPWQQSSTNFHPNNN) are disordered. A compositionally biased stretch (low complexity) spans 229–254 (RNTTTTNNNNNGNRNNRYDNRNNNNN). Residues 255 to 270 (SKPWQQSSTNFHPNNN) show a composition bias toward polar residues. Residues 278–294 (KCQICGVQGHSAKRCSQ) form a CCHC-type zinc finger. Catalysis depends on D334, which acts as the For protease activity. The Integrase catalytic domain occupies 519 to 682 (NSTRPLEYIY…SPFQKLFGTS (164 aa)). Residues D530 and D592 each coordinate Mg(2+). Positions 772–927 (WSPHTTLPTR…NNNQAPLNTH (156 aa)) are disordered. 2 stretches are compositionally biased toward low complexity: residues 796–827 (AATP…SFPS) and 836–898 (QNGP…SSTS). Over residues 899–912 (PTPPSILIHPPPPL) the composition is skewed to pro residues. The span at 915 to 927 (IVNNNNQAPLNTH) shows a compositional bias: polar residues. A Reverse transcriptase Ty1/copia-type domain is found at 982–1225 (NHTWDLVPPP…ITAKPVTTPM (244 aa)).

The catalysed reaction is DNA(n) + a 2'-deoxyribonucleoside 5'-triphosphate = DNA(n+1) + diphosphate. The sequence is that of Retrovirus-related Pol polyprotein from transposon RE1 (RE1) from Arabidopsis thaliana (Mouse-ear cress).